A 137-amino-acid chain; its full sequence is Fluoride-specific ion channel FluC 1 (137 aa).

Transmembrane regions (helical) follow at residues 4-24, 37-57, 67-87, and 98-118; these read LIYIIVGIAGILGALSRYYLG, LATLLINLAGCFLLAWLTTYI, VITGIGTGFIGSFTTFSTLSV, and WGIAFLYVSCSILGGLIMSGL. Positions 77 and 80 each coordinate Na(+).

This sequence belongs to the fluoride channel Fluc/FEX (TC 1.A.43) family.

It is found in the cell membrane. The enzyme catalyses fluoride(in) = fluoride(out). Its activity is regulated as follows. Na(+) is not transported, but it plays an essential structural role and its presence is essential for fluoride channel function. Functionally, fluoride-specific ion channel. Important for reducing fluoride concentration in the cell, thus reducing its toxicity. The protein is Fluoride-specific ion channel FluC 1 of Bacillus anthracis.